Here is a 454-residue protein sequence, read N- to C-terminus: DNA primase small subunit (454 aa).

Active-site residues include E66, D131, and D133. D131 and D133 together coordinate Mg(2+). 2 residues coordinate Mn(2+): D131 and D133. 131-133 (DID) serves as a coordination point for a ribonucleoside 5'-triphosphate. Zn(2+) is bound by residues C143, C144, C150, and C153. Positions 143–153 (CCSKTNICEKC) match the Zinc knuckle motif motif. 182 to 188 (SGRRGIH) is an a ribonucleoside 5'-triphosphate binding site. Position 333 (D333) interacts with Mg(2+). Position 333 (D333) interacts with Mn(2+). 342–345 (HLLK) contributes to the a ribonucleoside 5'-triphosphate binding site. The disordered stretch occupies residues 385–420 (DKNSQNDNGHGPTMETNTTENQKDNARGQSNKGHGF). Composition is skewed to polar residues over residues 389-404 (QNDN…NTTE) and 411-420 (RGQSNKGHGF).

Belongs to the eukaryotic-type primase small subunit family. In terms of assembly, heterodimer of a catalytic subunit spp1/pri1 and a regulatory subunit spp2/pri2, also known as the DNA primase complex. Component of the alpha DNA polymerase complex (also known as the alpha DNA polymerase-primase complex) consisting of four subunits: the catalytic subunit pol1, the accessory subunit spb70/pol12, and the primase complex subunits spp1/pri1 and spp2/pri2 respectively. It depends on Mg(2+) as a cofactor. Mn(2+) is required as a cofactor.

The protein resides in the nucleus. It carries out the reaction ssDNA + n NTP = ssDNA/pppN(pN)n-1 hybrid + (n-1) diphosphate.. Functionally, catalytic subunit of the DNA primase complex and component of the DNA polymerase alpha complex (also known as the alpha DNA polymerase-primase complex - primosome/replisome) which play an essential role in the initiation of DNA synthesis. During the S phase of the cell cycle, the DNA polymerase alpha complex (composed of a catalytic subunit pol1, an accessory subunit spb70/pol12 and two primase subunits, the catalytic subunit spp1/pri1 and the regulatory subunit spp2/pri2) is recruited to DNA at the replicative forks. The primase subunit of the polymerase alpha complex initiates DNA synthesis by oligomerising short RNA primers on both leading and lagging strands. The polypeptide is DNA primase small subunit (Schizosaccharomyces pombe (strain 972 / ATCC 24843) (Fission yeast)).